Consider the following 492-residue polypeptide: N-succinylglutamate 5-semialdehyde dehydrogenase (492 aa).

220–225 contacts NAD(+); the sequence is GSANTG. Residues glutamate 243 and cysteine 277 contribute to the active site.

This sequence belongs to the aldehyde dehydrogenase family. AstD subfamily.

It catalyses the reaction N-succinyl-L-glutamate 5-semialdehyde + NAD(+) + H2O = N-succinyl-L-glutamate + NADH + 2 H(+). Its pathway is amino-acid degradation; L-arginine degradation via AST pathway; L-glutamate and succinate from L-arginine: step 4/5. In terms of biological role, catalyzes the NAD-dependent reduction of succinylglutamate semialdehyde into succinylglutamate. In Escherichia coli O7:K1 (strain IAI39 / ExPEC), this protein is N-succinylglutamate 5-semialdehyde dehydrogenase.